A 234-amino-acid polypeptide reads, in one-letter code: ATP synthase subunit a 1 (234 aa).

Transmembrane regions (helical) follow at residues 29–49 (FLVHVTHAWLIMLLLTGVALL), 90–110 (LIATLALFILFSNLIALIPGF), 116–136 (NLNTNAALALAVFGMTHVVGV), 147–167 (FVGPVWWLAPLILPIEIIGHL), 186–206 (IVLVIFFTLVPLLLPIPMMLM), and 207–227 (GILVAFIQTFVFTLLAMIYIA).

The protein belongs to the ATPase A chain family. F-type ATPases have 2 components, CF(1) - the catalytic core - and CF(0) - the membrane proton channel. CF(1) has five subunits: alpha(3), beta(3), gamma(1), delta(1), epsilon(1). CF(0) has three main subunits: a(1), b(2) and c(9-12). The alpha and beta chains form an alternating ring which encloses part of the gamma chain. CF(1) is attached to CF(0) by a central stalk formed by the gamma and epsilon chains, while a peripheral stalk is formed by the delta and b chains.

It localises to the cell inner membrane. Its function is as follows. Key component of the proton channel; it plays a direct role in the translocation of protons across the membrane. This is ATP synthase subunit a 1 from Syntrophotalea carbinolica (strain DSM 2380 / NBRC 103641 / GraBd1) (Pelobacter carbinolicus).